The sequence spans 377 residues: Dual-specificity RNA methyltransferase RlmN (377 aa).

Residue Glu102 is the Proton acceptor of the active site. The Radical SAM core domain maps to 108-345 (EPDRRTLCVS…AVVRKNRGGD (238 aa)). Cys115 and Cys350 are disulfide-bonded. [4Fe-4S] cluster-binding residues include Cys122, Cys126, and Cys129. S-adenosyl-L-methionine contacts are provided by residues 177–178 (GE), Ser209, 231–233 (SLN), and Asn307. The active-site S-methylcysteine intermediate is Cys350. The tract at residues 354 to 377 (AAEGGPGDPRRPAPPPLTRLPAAG) is disordered.

This sequence belongs to the radical SAM superfamily. RlmN family. [4Fe-4S] cluster serves as cofactor.

It is found in the cytoplasm. The catalysed reaction is adenosine(2503) in 23S rRNA + 2 reduced [2Fe-2S]-[ferredoxin] + 2 S-adenosyl-L-methionine = 2-methyladenosine(2503) in 23S rRNA + 5'-deoxyadenosine + L-methionine + 2 oxidized [2Fe-2S]-[ferredoxin] + S-adenosyl-L-homocysteine. It carries out the reaction adenosine(37) in tRNA + 2 reduced [2Fe-2S]-[ferredoxin] + 2 S-adenosyl-L-methionine = 2-methyladenosine(37) in tRNA + 5'-deoxyadenosine + L-methionine + 2 oxidized [2Fe-2S]-[ferredoxin] + S-adenosyl-L-homocysteine. Its function is as follows. Specifically methylates position 2 of adenine 2503 in 23S rRNA and position 2 of adenine 37 in tRNAs. m2A2503 modification seems to play a crucial role in the proofreading step occurring at the peptidyl transferase center and thus would serve to optimize ribosomal fidelity. In Anaeromyxobacter sp. (strain Fw109-5), this protein is Dual-specificity RNA methyltransferase RlmN.